We begin with the raw amino-acid sequence, 254 residues long: Alcohol dehydrogenase (254 aa).

Position 10 to 33 (Phe10 to Leu33) interacts with NAD(+). Ser138 contributes to the substrate binding site. Catalysis depends on Tyr151, which acts as the Proton acceptor.

This sequence belongs to the short-chain dehydrogenases/reductases (SDR) family. As to quaternary structure, homodimer.

The catalysed reaction is a primary alcohol + NAD(+) = an aldehyde + NADH + H(+). It carries out the reaction a secondary alcohol + NAD(+) = a ketone + NADH + H(+). This is Alcohol dehydrogenase (Adh) from Drosophila flavomontana (Fruit fly).